The following is a 347-amino-acid chain: UDP-N-acetylenolpyruvoylglucosamine reductase (347 aa).

Positions 24-195 constitute an FAD-binding PCMH-type domain; it reads FDARARVAAR…VAVTFRLPKA (172 aa). Arg-171 is a catalytic residue. Ser-247 serves as the catalytic Proton donor. The active site involves Glu-343.

It belongs to the MurB family. It depends on FAD as a cofactor.

The protein localises to the cytoplasm. It carries out the reaction UDP-N-acetyl-alpha-D-muramate + NADP(+) = UDP-N-acetyl-3-O-(1-carboxyvinyl)-alpha-D-glucosamine + NADPH + H(+). Its pathway is cell wall biogenesis; peptidoglycan biosynthesis. In terms of biological role, cell wall formation. This Burkholderia pseudomallei (strain 668) protein is UDP-N-acetylenolpyruvoylglucosamine reductase.